A 372-amino-acid polypeptide reads, in one-letter code: NAD(P)H-quinone oxidoreductase subunit 1 (372 aa).

Transmembrane regions (helical) follow at residues 29–49 (WLPFPMLLMIVVATVGVLVTV), 97–117 (LLFTLGPVIVAVPVFLSYLVV), 128–148 (LGVAIFLWIALSSIQPIGLLM), 176–196 (LALAVLAVAMMSNSLSTIDIV), 204–224 (ILGWNIWRQPLGFIIFWIAVL), 254–274 (FALYYLASYVNLVLSSLLVAV), 308–328 (TLGIIMTLLKTYLLVFIAVLL), and 351–371 (VALVNLLLTAALKLTFPFAFG).

This sequence belongs to the complex I subunit 1 family. As to quaternary structure, NDH-1 is composed of at least 11 different subunits.

It localises to the cellular thylakoid membrane. It catalyses the reaction a plastoquinone + NADH + (n+1) H(+)(in) = a plastoquinol + NAD(+) + n H(+)(out). The catalysed reaction is a plastoquinone + NADPH + (n+1) H(+)(in) = a plastoquinol + NADP(+) + n H(+)(out). In terms of biological role, NDH-1 shuttles electrons from an unknown electron donor, via FMN and iron-sulfur (Fe-S) centers, to quinones in the respiratory and/or the photosynthetic chain. The immediate electron acceptor for the enzyme in this species is believed to be plastoquinone. Couples the redox reaction to proton translocation, and thus conserves the redox energy in a proton gradient. The sequence is that of NAD(P)H-quinone oxidoreductase subunit 1 from Trichodesmium erythraeum (strain IMS101).